The following is a 460-amino-acid chain: tRNA modification GTPase MnmE (460 aa).

Residues arginine 29, glutamate 91, and lysine 132 each contribute to the (6S)-5-formyl-5,6,7,8-tetrahydrofolate site. Residues 227 to 383 (GISIALIGKT…LIDTIIKKCG (157 aa)) enclose the TrmE-type G domain. Asparagine 237 is a K(+) binding site. GTP-binding positions include 237 to 242 (NVGKSS), 256 to 262 (TNIPGTT), and 281 to 284 (DTAG). Serine 241 contributes to the Mg(2+) binding site. K(+) is bound by residues threonine 256, isoleucine 258, and threonine 261. Threonine 262 contributes to the Mg(2+) binding site. Lysine 460 serves as a coordination point for (6S)-5-formyl-5,6,7,8-tetrahydrofolate.

This sequence belongs to the TRAFAC class TrmE-Era-EngA-EngB-Septin-like GTPase superfamily. TrmE GTPase family. Homodimer. Heterotetramer of two MnmE and two MnmG subunits. K(+) is required as a cofactor.

The protein resides in the cytoplasm. Its function is as follows. Exhibits a very high intrinsic GTPase hydrolysis rate. Involved in the addition of a carboxymethylaminomethyl (cmnm) group at the wobble position (U34) of certain tRNAs, forming tRNA-cmnm(5)s(2)U34. In Prochlorococcus marinus (strain MIT 9312), this protein is tRNA modification GTPase MnmE.